The following is a 535-amino-acid chain: EGF domain-specific O-linked N-acetylglucosamine transferase (535 aa).

The first 16 residues, 1–16, serve as a signal peptide directing secretion; that stretch reads MFILLMFVLLLQEILA. N-linked (GlcNAc...) asparagine glycans are attached at residues N22 and N271. Residues 303 to 305 carry the Required for optimal activity motif; the sequence is DYD. N-linked (GlcNAc...) asparagine glycosylation is found at N362 and N501.

This sequence belongs to the glycosyltransferase 61 family.

The protein resides in the endoplasmic reticulum lumen. It catalyses the reaction L-seryl-[protein] + UDP-N-acetyl-alpha-D-glucosamine = 3-O-(N-acetyl-beta-D-glucosaminyl)-L-seryl-[protein] + UDP + H(+). It carries out the reaction L-threonyl-[protein] + UDP-N-acetyl-alpha-D-glucosamine = 3-O-(N-acetyl-beta-D-glucosaminyl)-L-threonyl-[protein] + UDP + H(+). Its function is as follows. Catalyzes the transfer of a single N-acetylglucosamine from UDP-GlcNAc to a serine or threonine residue in extracellular proteins resulting in their modification with a beta-linked N-acetylglucosamine (O-GlcNAc). Specifically glycosylates the Thr residue located between the fifth and sixth conserved cysteines of folded EGF-like domains. This is EGF domain-specific O-linked N-acetylglucosamine transferase (EOGT) from Gallus gallus (Chicken).